Reading from the N-terminus, the 325-residue chain is tRNA N6-adenosine threonylcarbamoyltransferase (325 aa).

Fe cation contacts are provided by His111 and His115. Substrate contacts are provided by residues 134–138 (LISGG), Asp167, Gly180, and Asn277. Asp305 is a Fe cation binding site.

The protein belongs to the KAE1 / TsaD family. It depends on Fe(2+) as a cofactor.

It localises to the cytoplasm. The protein resides in the secreted. It carries out the reaction L-threonylcarbamoyladenylate + adenosine(37) in tRNA = N(6)-L-threonylcarbamoyladenosine(37) in tRNA + AMP + H(+). Required for the formation of a threonylcarbamoyl group on adenosine at position 37 (t(6)A37) in tRNAs that read codons beginning with adenine. Is involved in the transfer of the threonylcarbamoyl moiety of threonylcarbamoyl-AMP (TC-AMP) to the N6 group of A37, together with TsaE and TsaB. TsaD likely plays a direct catalytic role in this reaction. The protein is tRNA N6-adenosine threonylcarbamoyltransferase of Mannheimia haemolytica (Pasteurella haemolytica).